A 338-amino-acid polypeptide reads, in one-letter code: Ketol-acid reductoisomerase (NADP(+)) (338 aa).

Positions 1–181 (MKVFYDKDCD…GGGRTGIIET (181 aa)) constitute a KARI N-terminal Rossmann domain. NADP(+)-binding positions include 24-27 (YGSQ), Arg-47, Ser-50, Thr-52, and 82-85 (DEFQ). Residue His-107 is part of the active site. Gly-133 is a binding site for NADP(+). A KARI C-terminal knotted domain is found at 182–327 (TFKDETETDL…EQLRSMMPWI (146 aa)). Residues Asp-190, Glu-194, Glu-226, and Glu-230 each contribute to the Mg(2+) site. Residue Ser-251 participates in substrate binding.

Belongs to the ketol-acid reductoisomerase family. The cofactor is Mg(2+).

It catalyses the reaction (2R)-2,3-dihydroxy-3-methylbutanoate + NADP(+) = (2S)-2-acetolactate + NADPH + H(+). It carries out the reaction (2R,3R)-2,3-dihydroxy-3-methylpentanoate + NADP(+) = (S)-2-ethyl-2-hydroxy-3-oxobutanoate + NADPH + H(+). It functions in the pathway amino-acid biosynthesis; L-isoleucine biosynthesis; L-isoleucine from 2-oxobutanoate: step 2/4. The protein operates within amino-acid biosynthesis; L-valine biosynthesis; L-valine from pyruvate: step 2/4. Involved in the biosynthesis of branched-chain amino acids (BCAA). Catalyzes an alkyl-migration followed by a ketol-acid reduction of (S)-2-acetolactate (S2AL) to yield (R)-2,3-dihydroxy-isovalerate. In the isomerase reaction, S2AL is rearranged via a Mg-dependent methyl migration to produce 3-hydroxy-3-methyl-2-ketobutyrate (HMKB). In the reductase reaction, this 2-ketoacid undergoes a metal-dependent reduction by NADPH to yield (R)-2,3-dihydroxy-isovalerate. In Pseudomonas fluorescens (strain ATCC BAA-477 / NRRL B-23932 / Pf-5), this protein is Ketol-acid reductoisomerase (NADP(+)).